Here is a 232-residue protein sequence, read N- to C-terminus: Sugar fermentation stimulation protein homolog (232 aa).

It belongs to the SfsA family.

In Geobacter sulfurreducens (strain ATCC 51573 / DSM 12127 / PCA), this protein is Sugar fermentation stimulation protein homolog.